We begin with the raw amino-acid sequence, 408 residues long: Ubiquitin-associated domain-containing protein 1 (408 aa).

The region spanning 14 to 98 (LRLQVCTMEG…LLLIKKRAPP (85 aa)) is the Ubiquitin-like domain. The tract at residues 100 to 119 (LPKMADVSAEEKRKQEQKAP) is disordered. The span at 108 to 119 (AEEKRKQEQKAP) shows a compositional bias: basic and acidic residues. Residues 185–231 (DEDEEDRVDEIALRQLTEMGFPESRAVKALRLNHMSVTQAMEWLIEH) enclose the UBA 1 domain. The segment at 235–275 (PAVDAPLPGQTPSEAAAEAGASSAEATAGPSSEAGGEEAKD) is disordered. The segment covering 245–268 (TPSEAAAEAGASSAEATAGPSSEA) has biased composition (low complexity). The UBA 2 domain maps to 291–331 (RPDPRAVIALMEMGFDEKEVVDALRVNNNQQNAACEWLLGD). Positions 356-395 (NPVVQLGLTNPKTLLAFEDMLENPLNSTQWMNDPETGPVM) constitute an STI1 domain.

Component of the KPC complex.

It localises to the cytoplasm. It participates in protein modification; protein ubiquitination. In terms of biological role, non-catalytic component of the KPC complex, a E3 ubiquitin-protein ligase complex that mediates polyubiquitination of target proteins, such as CDKN1B and NFKB1. Within the KPC complex, UBAC1 acts as an adapter that promotes the transfer of target proteins that have been polyubiquitinated by RNF123/KPC1 to the 26S proteasome. This chain is Ubiquitin-associated domain-containing protein 1 (UBAC1), found in Gallus gallus (Chicken).